The chain runs to 656 residues: uncharacterized protein (656 aa).

The disordered stretch occupies residues Glu623–Arg656. Basic and acidic residues predominate over residues Thr645–Arg656.

This is an uncharacterized protein from Mycobacterium tuberculosis (strain ATCC 25618 / H37Rv).